The primary structure comprises 247 residues: Ribonuclease PH (247 aa).

Phosphate is bound by residues arginine 87 and 125–127; that span reads GTR.

This sequence belongs to the RNase PH family. As to quaternary structure, homohexameric ring arranged as a trimer of dimers.

The catalysed reaction is tRNA(n+1) + phosphate = tRNA(n) + a ribonucleoside 5'-diphosphate. In terms of biological role, phosphorolytic 3'-5' exoribonuclease that plays an important role in tRNA 3'-end maturation. Removes nucleotide residues following the 3'-CCA terminus of tRNAs; can also add nucleotides to the ends of RNA molecules by using nucleoside diphosphates as substrates, but this may not be physiologically important. Probably plays a role in initiation of 16S rRNA degradation (leading to ribosome degradation) during starvation. In Trichormus variabilis (strain ATCC 29413 / PCC 7937) (Anabaena variabilis), this protein is Ribonuclease PH.